The chain runs to 485 residues: Glutamyl-tRNA(Gln) amidotransferase subunit A 1 (485 aa).

Residues Lys-79 and Ser-154 each act as charge relay system in the active site. Ser-178 functions as the Acyl-ester intermediate in the catalytic mechanism.

It belongs to the amidase family. GatA subfamily. Heterotrimer of A, B and C subunits.

The catalysed reaction is L-glutamyl-tRNA(Gln) + L-glutamine + ATP + H2O = L-glutaminyl-tRNA(Gln) + L-glutamate + ADP + phosphate + H(+). Its function is as follows. Allows the formation of correctly charged Gln-tRNA(Gln) through the transamidation of misacylated Glu-tRNA(Gln) in organisms which lack glutaminyl-tRNA synthetase. The reaction takes place in the presence of glutamine and ATP through an activated gamma-phospho-Glu-tRNA(Gln). The chain is Glutamyl-tRNA(Gln) amidotransferase subunit A 1 (gatA1) from Clostridium acetobutylicum (strain ATCC 824 / DSM 792 / JCM 1419 / IAM 19013 / LMG 5710 / NBRC 13948 / NRRL B-527 / VKM B-1787 / 2291 / W).